The primary structure comprises 362 residues: tRNA-specific 2-thiouridylase MnmA (362 aa).

Residues 13–20 (GLSGGVDS) and Met-39 each bind ATP. An interaction with target base in tRNA region spans residues 99–101 (NPD). Cys-104 functions as the Nucleophile in the catalytic mechanism. A disulfide bridge connects residues Cys-104 and Cys-200. Gly-128 provides a ligand contact to ATP. The segment at 150-152 (KDQ) is interaction with tRNA. The active-site Cysteine persulfide intermediate is Cys-200.

This sequence belongs to the MnmA/TRMU family.

Its subcellular location is the cytoplasm. The catalysed reaction is S-sulfanyl-L-cysteinyl-[protein] + uridine(34) in tRNA + AH2 + ATP = 2-thiouridine(34) in tRNA + L-cysteinyl-[protein] + A + AMP + diphosphate + H(+). Functionally, catalyzes the 2-thiolation of uridine at the wobble position (U34) of tRNA, leading to the formation of s(2)U34. This is tRNA-specific 2-thiouridylase MnmA from Coxiella burnetii (strain RSA 493 / Nine Mile phase I).